Reading from the N-terminus, the 260-residue chain is Proteasome subunit alpha type-1 (260 aa).

A disordered region spans residues 231–260 (FLEGLEERPQRKPALPADEPAEKAEEPMEH). The segment covering 250–260 (PAEKAEEPMEH) has biased composition (basic and acidic residues).

It belongs to the peptidase T1A family. The 26S proteasome consists of a 20S proteasome core and two 19S regulatory subunits. The 20S proteasome core is a barrel-shaped complex made of 28 subunits that are arranged in four stacked rings. The two outer rings are each formed by seven alpha subunits, and the two inner rings are formed by seven beta subunits. The proteolytic activity is exerted by three beta-subunits PSMB5, PSMB6 and PSMB7.

The protein localises to the cytoplasm. It is found in the nucleus. Component of the 20S core proteasome complex involved in the proteolytic degradation of most intracellular proteins. This complex plays numerous essential roles within the cell by associating with different regulatory particles. Associated with two 19S regulatory particles, forms the 26S proteasome and thus participates in the ATP-dependent degradation of ubiquitinated proteins. The 26S proteasome plays a key role in the maintenance of protein homeostasis by removing misfolded or damaged proteins that could impair cellular functions, and by removing proteins whose functions are no longer required. Associated with the PA200 or PA28, the 20S proteasome mediates ubiquitin-independent protein degradation. This type of proteolysis is required in several pathways including spermatogenesis (20S-PA200 complex) or generation of a subset of MHC class I-presented antigenic peptides (20S-PA28 complex). The protein is Proteasome subunit alpha type-1 (PSMA1) of Gallus gallus (Chicken).